Here is a 78-residue protein sequence, read N- to C-terminus: Acyl carrier protein (78 aa).

The Carrier domain occupies 1 to 76 (MSLEDDVKLI…DVITYIKTRQ (76 aa)). At Ser36 the chain carries O-(pantetheine 4'-phosphoryl)serine.

Belongs to the acyl carrier protein (ACP) family. Post-translationally, 4'-phosphopantetheine is transferred from CoA to a specific serine of apo-ACP by AcpS. This modification is essential for activity because fatty acids are bound in thioester linkage to the sulfhydryl of the prosthetic group.

It is found in the cytoplasm. It participates in lipid metabolism; fatty acid biosynthesis. Functionally, carrier of the growing fatty acid chain in fatty acid biosynthesis. The polypeptide is Acyl carrier protein (Chlamydia felis (strain Fe/C-56) (Chlamydophila felis)).